We begin with the raw amino-acid sequence, 260 residues long: ATP synthase subunit a (260 aa).

Transmembrane regions (helical) follow at residues 37–57 (FTNA…FMTL), 95–115 (FFPF…IGMF), 125–145 (IVVT…TGFV), 154–174 (VFVP…IEII), 191–211 (MLAG…FMTM), and 233–253 (EFLV…MYLH).

This sequence belongs to the ATPase A chain family. As to quaternary structure, F-type ATPases have 2 components, CF(1) - the catalytic core - and CF(0) - the membrane proton channel. CF(1) has five subunits: alpha(3), beta(3), gamma(1), delta(1), epsilon(1). CF(0) has three main subunits: a(1), b(2) and c(9-12). The alpha and beta chains form an alternating ring which encloses part of the gamma chain. CF(1) is attached to CF(0) by a central stalk formed by the gamma and epsilon chains, while a peripheral stalk is formed by the delta and b chains.

It is found in the cell inner membrane. In terms of biological role, key component of the proton channel; it plays a direct role in the translocation of protons across the membrane. This Parvibaculum lavamentivorans (strain DS-1 / DSM 13023 / NCIMB 13966) protein is ATP synthase subunit a.